We begin with the raw amino-acid sequence, 460 residues long: Endoglucanase C (460 aa).

The signal sequence occupies residues 1-32 (MIKGSSLKRFKSLVMAAIFSVSIISTAIASSA). Glu99 (proton donor) is an active-site residue. The active-site Nucleophile is the Asp155. In terms of domain architecture, Dockerin spans 400–460 (KPDLKGDVNN…FAQLKVKLLN (61 aa)).

This sequence belongs to the glycosyl hydrolase 8 (cellulase D) family. As to quaternary structure, monomer. Post-translationally, there are two forms of the cellulase. The shorter form lacks probably the C-terminal reiterated domains.

It catalyses the reaction Endohydrolysis of (1-&gt;4)-beta-D-glucosidic linkages in cellulose, lichenin and cereal beta-D-glucans.. The protein operates within glycan metabolism; cellulose degradation. In terms of biological role, the biological conversion of cellulose to glucose generally requires three types of hydrolytic enzymes: (1) Endoglucanases which cut internal beta-1,4-glucosidic bonds; (2) Exocellobiohydrolases that cut the disaccharide cellobiose from the non-reducing end of the cellulose polymer chain; (3) Beta-1,4-glucosidases which hydrolyze the cellobiose and other short cello-oligosaccharides to glucose. The sequence is that of Endoglucanase C (celCCC) from Ruminiclostridium cellulolyticum (strain ATCC 35319 / DSM 5812 / JCM 6584 / H10) (Clostridium cellulolyticum).